A 472-amino-acid chain; its full sequence is MASKGKVTQVIGAVVDVQFEDGLPAILNALETTNNGKRLVLEVAQHLGENTVRTIAMDATEGLVRGAAVSDTGGPITVPVGNATLGRILNVIGEPVDERGDVSKAEARAIHQPAPDFAAQSTESQILVTGIKVIDLLAPYSKGGKIGLFGGAGVGKTVLIMELINNIAKVHSGFSVFAGVGERTREGNDLYHEMIESGVINLEKLEESKVALVYGQMNEPPGARARVALTGLTLAEQFRDQSGTDVLFFVDNIFRFTQAGSEVSALLGRIPSAVGYQPTLATDMGALQERITSTKAGSITSVQAIYVPADDLTDPAPATSFAHLDATTVLSRAISELGIYPAVDPLDSTSRILDPQVVGEEHYQVARDVQGMLQRYKSLQDIIAILGMDELSEEDKLTVARARKIQRFLSQPFDVAKVFTGSDGVQVPLEDTIKSFKAVVAGEYDHLPEAAFYMVGGIDDVIAKAQRLAAAA.

Gly150–Thr157 is a binding site for ATP.

The protein belongs to the ATPase alpha/beta chains family. F-type ATPases have 2 components, CF(1) - the catalytic core - and CF(0) - the membrane proton channel. CF(1) has five subunits: alpha(3), beta(3), gamma(1), delta(1), epsilon(1). CF(0) has four main subunits: a, b, b' and c.

It localises to the cellular chromatophore membrane. It carries out the reaction ATP + H2O + 4 H(+)(in) = ADP + phosphate + 5 H(+)(out). Functionally, produces ATP from ADP in the presence of a proton gradient across the membrane. The catalytic sites are hosted primarily by the beta subunits. The chain is ATP synthase subunit beta from Rhodobacter capsulatus (Rhodopseudomonas capsulata).